We begin with the raw amino-acid sequence, 283 residues long: Pantothenate synthetase (283 aa).

Residue 31–38 (MGALHDGH) coordinates ATP. The Proton donor role is filled by H38. A (R)-pantoate-binding site is contributed by Q62. Position 62 (Q62) interacts with beta-alanine. 148–151 (GKKD) serves as a coordination point for ATP. Q154 lines the (R)-pantoate pocket. ATP-binding positions include I177 and 185-188 (KSSR).

The protein belongs to the pantothenate synthetase family. As to quaternary structure, homodimer.

The protein localises to the cytoplasm. It catalyses the reaction (R)-pantoate + beta-alanine + ATP = (R)-pantothenate + AMP + diphosphate + H(+). It functions in the pathway cofactor biosynthesis; (R)-pantothenate biosynthesis; (R)-pantothenate from (R)-pantoate and beta-alanine: step 1/1. Catalyzes the condensation of pantoate with beta-alanine in an ATP-dependent reaction via a pantoyl-adenylate intermediate. The sequence is that of Pantothenate synthetase from Oceanobacillus iheyensis (strain DSM 14371 / CIP 107618 / JCM 11309 / KCTC 3954 / HTE831).